A 547-amino-acid polypeptide reads, in one-letter code: Probable ATP-dependent RNA helicase DDX56 (547 aa).

The short motif at 7-35 is the Q motif element; that stretch reads LGFEHMGLDPRLLQAVTDLGWSRPTLIQE. The region spanning 38–218 is the Helicase ATP-binding domain; it reads IPLALEGKDL…ELILHNPVTL (181 aa). 51–58 lines the ATP pocket; it reads ARTGSGKT. Phosphoserine is present on serine 126. A Phosphothreonine modification is found at threonine 141. The short motif at 166–169 is the DEAD box element; that stretch reads DEAD. Positions 230 to 424 constitute a Helicase C-terminal domain; that stretch reads QLQQFQVVCE…PYQFRMEEIE (195 aa). Composition is skewed to basic residues over residues 506-525 and 532-547; these read RPHK…KRAK and SFKH…AKPS. Residues 506 to 547 are disordered; it reads RPHKKRKKLSSSCRKAKRAKSQNPLRSFKHKGKKFRPTAKPS. Serine 532 carries the post-translational modification Phosphoserine.

This sequence belongs to the DEAD box helicase family. DDX56/DBP9 subfamily. As to quaternary structure, may form homooligomeric complexes. Interacts with IRF3. Interacts with OCT4 and POU5F1. In terms of assembly, (Microbial infection) Interacts with West Nile virus capsid protein C. (Microbial infection) Interacts with foot-and-mouth disease virus protein 3A; this interaction leads to inhibition of type I interferon production. As to quaternary structure, (Microbial infection) Interacts with EMCV protein 3C; this interaction leads to inhibition of type I interferon production. In terms of tissue distribution, detected in heart, brain, liver, pancreas, placenta and lung.

It is found in the nucleus. The protein resides in the nucleolus. It carries out the reaction ATP + H2O = ADP + phosphate + H(+). Functionally, nucleolar RNA helicase that plays a role in various biological processes including innate immunity, ribosome biogenesis or nucleolus organization. Plays an essential role in maintaining nucleolar integrity in planarian stem cells. Maintains embryonic stem cells proliferation by conventional regulation of ribosome assembly and interaction with OCT4 and POU5F1 complex. Regulates antiviral innate immunity by inhibiting the virus-triggered signaling nuclear translocation of IRF3. Mechanistically, acts by disrupting the interaction between IRF3 and importin IPO5. May play a role in later stages of the processing of the pre-ribosomal particles leading to mature 60S ribosomal subunits. Has intrinsic ATPase activity. In terms of biological role, (Microbial infection) Helicase activity is important for packaging viral RNA into virions during West Nile virus infection. Its function is as follows. (Microbial infection) Plays a positive role in foot-and-mouth disease virus replication by inhibiting the phosphorylation of IRF3 leading to inhibition of type I interferon. (Microbial infection) Plays a positive role in EMCV replication by interrupting IRF3 phosphorylation and its nucleus translocation. The sequence is that of Probable ATP-dependent RNA helicase DDX56 (DDX56) from Homo sapiens (Human).